The sequence spans 208 residues: Protein-L-isoaspartate O-methyltransferase (208 aa).

The active site involves Ser-59.

Belongs to the methyltransferase superfamily. L-isoaspartyl/D-aspartyl protein methyltransferase family.

It localises to the cytoplasm. It carries out the reaction [protein]-L-isoaspartate + S-adenosyl-L-methionine = [protein]-L-isoaspartate alpha-methyl ester + S-adenosyl-L-homocysteine. In terms of biological role, catalyzes the methyl esterification of L-isoaspartyl residues in peptides and proteins that result from spontaneous decomposition of normal L-aspartyl and L-asparaginyl residues. It plays a role in the repair and/or degradation of damaged proteins. The polypeptide is Protein-L-isoaspartate O-methyltransferase (Proteus mirabilis (strain HI4320)).